A 463-amino-acid polypeptide reads, in one-letter code: Glutamate--tRNA ligase 1 (463 aa).

The 'HIGH' region signature appears at 10–20 (PSPTGFLHIGS). Positions 239 to 243 (KLSKR) match the 'KMSKS' region motif. Lys-242 is an ATP binding site.

It belongs to the class-I aminoacyl-tRNA synthetase family. Glutamate--tRNA ligase type 1 subfamily. In terms of assembly, monomer.

The protein localises to the cytoplasm. It catalyses the reaction tRNA(Glu) + L-glutamate + ATP = L-glutamyl-tRNA(Glu) + AMP + diphosphate. Functionally, catalyzes the attachment of glutamate to tRNA(Glu) in a two-step reaction: glutamate is first activated by ATP to form Glu-AMP and then transferred to the acceptor end of tRNA(Glu). The polypeptide is Glutamate--tRNA ligase 1 (Rickettsia canadensis (strain McKiel)).